The primary structure comprises 166 residues: Regulatory protein RecX (166 aa).

It belongs to the RecX family.

The protein localises to the cytoplasm. Its function is as follows. Modulates RecA activity. This Salmonella paratyphi A (strain ATCC 9150 / SARB42) protein is Regulatory protein RecX.